Reading from the N-terminus, the 723-residue chain is MTGKKKNRHQKKSSQDHNNEPLTEIDQTTDETTTTTTTTTTTTEEETKNENTIVENKDEDKKVEESVQEKEEEKEKEKEKEKEKEKEKEKEKEKENNIEKEEEKKEEEKEEKNVEKEEEKEEKQTKTDDNMWNNEDEIDVPTVEGEIETDIKDEKKEEKKKVEKEIEDPNKKYFIKQKKIIKRKKEKKVKPQPVQPTPPVPAPAPQQSSGWGNWFSSIGNAVSNTITQIARVDLDDSDEDSEEEIMVEEDIEVSKKEYERYHRKKLGLPLSDTEDSDNDNDNGGDDNDNAIMNAIDNGVFKTADMIADSLYFAGSFLSSGFKTVQDNANIENVKGLTQEVSNISLDTKNKISNSELYEKSQKIASQMMDSSVDALESVGQRAYSMFSTQMKNKSNNDENNNNNNNNNQQQPQQQQTTSPTLSTSPTSPKSPTTTTTNTTTTTTTNTNNNNNNTSTNYEFNINESIFEAGEFDSSKCAEHFNITKFIQDIEKLSVESTMKAHQINRKVISTSSIKSSVDLVLNEIKELFENEELPENLSNSNTLSFSNIHIFEIEKKYREFFDKLQEFTPQLKNQSIELGLCRGLEKIYQLTAIGLELISTIASSIPDEKAPSDVTNNNNNNNNTGEWAISKSNEILFTITKITQDIKLISAMLTEIIKSKQTPNSRKLLNNLHVETTNAISYIQDTKGGFVNICQIMYLNEIKFSLKGPTSPISTPNRKQQKS.

Positions Met1–Lys12 are enriched in basic residues. Disordered stretches follow at residues Met1–Ile166, Ile181–Gly212, Leu268–Asn289, and Lys391–Thr455. Residues Asp30–Thr42 are compositionally biased toward low complexity. 2 stretches are compositionally biased toward basic and acidic residues: residues Glu45–Asp129 and Thr149–Ile166. Residues Ile53 to Tyr173 are a coiled coil. The span at Ile181–Lys190 shows a compositional bias: basic residues. The span at Pro193–Ala204 shows a compositional bias: pro residues. The segment covering Asp272 to Asp288 has biased composition (acidic residues). Over residues Asp397 to Thr455 the composition is skewed to low complexity.

This is an uncharacterized protein from Dictyostelium discoideum (Social amoeba).